The chain runs to 290 residues: Arylamine N-acetyltransferase, pineal gland isozyme NAT-10 (290 aa).

The active-site Acyl-thioester intermediate is cysteine 68. Catalysis depends on residues histidine 107 and aspartate 122.

The protein belongs to the arylamine N-acetyltransferase family.

The enzyme catalyses an arylamine + acetyl-CoA = an N-acetylarylamine + CoA. In Gallus gallus (Chicken), this protein is Arylamine N-acetyltransferase, pineal gland isozyme NAT-10.